The following is a 379-amino-acid chain: uncharacterized protein (379 aa).

This sequence belongs to the mimivirus L17x/L18x family.

This is an uncharacterized protein from Acanthamoeba polyphaga mimivirus (APMV).